Reading from the N-terminus, the 234-residue chain is Accessory gland protein Acp29AB (234 aa).

The N-terminal stretch at 1–21 (MYATNLLYLLALWNLWLVSGG) is a signal peptide. N-linked (GlcNAc...) asparagine glycosylation is found at asparagine 29, asparagine 61, asparagine 127, and asparagine 164. A C-type lectin domain is found at 137–234 (VTCREMNGHL…SFVCQANQWA (98 aa)). Disulfide bonds link cysteine 139–cysteine 228 and cysteine 207–cysteine 220.

It is found in the secreted. Responsible for physiological and behavioral changes in mated female flies. The sequence is that of Accessory gland protein Acp29AB (Acp29AB) from Drosophila simulans (Fruit fly).